The primary structure comprises 415 residues: L-cysteine:1D-myo-inositol 2-amino-2-deoxy-alpha-D-glucopyranoside ligase (415 aa).

A Zn(2+)-binding site is contributed by Cys43. L-cysteinyl-5'-AMP is bound by residues 43–46 (CGIT), Thr58, and 81–83 (NIT). A 'HIGH' region motif is present at residues 45 to 55 (ITPYDATHLGH). The short motif at 187-192 (ERGGDP) is the 'ERGGDP' region element. Trp227 provides a ligand contact to L-cysteinyl-5'-AMP. A Zn(2+)-binding site is contributed by Cys231. Residue 249–251 (GSD) participates in L-cysteinyl-5'-AMP binding. A Zn(2+)-binding site is contributed by His256. Ile283 lines the L-cysteinyl-5'-AMP pocket. The short motif at 289 to 293 (KMSKS) is the 'KMSKS' region element.

This sequence belongs to the class-I aminoacyl-tRNA synthetase family. MshC subfamily. As to quaternary structure, monomer. Zn(2+) is required as a cofactor.

It catalyses the reaction 1D-myo-inositol 2-amino-2-deoxy-alpha-D-glucopyranoside + L-cysteine + ATP = 1D-myo-inositol 2-(L-cysteinylamino)-2-deoxy-alpha-D-glucopyranoside + AMP + diphosphate + H(+). Catalyzes the ATP-dependent condensation of GlcN-Ins and L-cysteine to form L-Cys-GlcN-Ins. The chain is L-cysteine:1D-myo-inositol 2-amino-2-deoxy-alpha-D-glucopyranoside ligase from Mycobacterium sp. (strain JLS).